Reading from the N-terminus, the 502-residue chain is Probable RNA exonuclease C9B6.11c (502 aa).

A disordered region spans residues 338–379 (SELEEKNASTKTENDSNEDDKEECQSSSTSSVPESTASTPKK). The segment covering 341–351 (EEKNASTKTEN) has biased composition (basic and acidic residues). Over residues 363 to 376 (SSSTSSVPESTAST) the composition is skewed to low complexity.

It belongs to the CCR4/nocturin family.

It is found in the cytoplasm. The protein localises to the nucleus. The polypeptide is Probable RNA exonuclease C9B6.11c (Schizosaccharomyces pombe (strain 972 / ATCC 24843) (Fission yeast)).